Here is a 224-residue protein sequence, read N- to C-terminus: Cytidylate kinase (224 aa).

9–17 (GPSGVGKGT) lines the ATP pocket.

It belongs to the cytidylate kinase family. Type 1 subfamily.

It localises to the cytoplasm. It carries out the reaction CMP + ATP = CDP + ADP. The catalysed reaction is dCMP + ATP = dCDP + ADP. This Dichelobacter nodosus (strain VCS1703A) protein is Cytidylate kinase.